The primary structure comprises 468 residues: Uronate isomerase (468 aa).

It belongs to the metallo-dependent hydrolases superfamily. Uronate isomerase family.

The catalysed reaction is D-glucuronate = D-fructuronate. It catalyses the reaction aldehydo-D-galacturonate = keto-D-tagaturonate. It functions in the pathway carbohydrate metabolism; pentose and glucuronate interconversion. This Phocaeicola vulgatus (strain ATCC 8482 / DSM 1447 / JCM 5826 / CCUG 4940 / NBRC 14291 / NCTC 11154) (Bacteroides vulgatus) protein is Uronate isomerase.